The primary structure comprises 232 residues: tRNA (guanine-N(7)-)-methyltransferase (232 aa).

4 residues coordinate S-adenosyl-L-methionine: E63, E88, D115, and D137. D137 is a catalytic residue. Substrate is bound by residues K141, D173, and 211–214 (TRYE).

This sequence belongs to the class I-like SAM-binding methyltransferase superfamily. TrmB family.

It catalyses the reaction guanosine(46) in tRNA + S-adenosyl-L-methionine = N(7)-methylguanosine(46) in tRNA + S-adenosyl-L-homocysteine. It participates in tRNA modification; N(7)-methylguanine-tRNA biosynthesis. Functionally, catalyzes the formation of N(7)-methylguanine at position 46 (m7G46) in tRNA. This is tRNA (guanine-N(7)-)-methyltransferase from Rhizobium meliloti (strain 1021) (Ensifer meliloti).